An 84-amino-acid polypeptide reads, in one-letter code: Acetylcholine receptor subunit alpha (84 aa).

Disulfide bonds link Cys-7-Cys-21 and Cys-71-Cys-72. N-linked (GlcNAc...) asparagine glycosylation occurs at Asn-20.

The protein belongs to the ligand-gated ion channel (TC 1.A.9) family. Acetylcholine receptor (TC 1.A.9.1) subfamily. Alpha-1/CHRNA1 sub-subfamily. In terms of assembly, one of the alpha chains that assemble within the acetylcholine receptor, a pentamer of two alpha chains, a beta, a delta, and a gamma (in immature muscle) or epsilon (in mature muscle) chains. The muscle heteropentamer composed of alpha-1, beta-1, delta, epsilon subunits interacts with the alpha-conotoxin ImII.

It is found in the postsynaptic cell membrane. The protein resides in the cell membrane. The catalysed reaction is K(+)(in) = K(+)(out). The enzyme catalyses Na(+)(in) = Na(+)(out). Its function is as follows. Upon acetylcholine binding, the AChR responds by an extensive change in conformation that affects all subunits and leads to opening of an ion-conducting channel across the plasma membrane. The chain is Acetylcholine receptor subunit alpha (CHRNA1) from Felis catus (Cat).